The chain runs to 77 residues: MEVKVFRVKGTFERLGKKQPFTKEYRALKEEHVRELVYSDIGSKHRVPRTKIWIESIEEIKPEEAEDPVVRRLSLEL.

It belongs to the eukaryotic ribosomal protein eL20 family. As to quaternary structure, part of the 50S ribosomal subunit. Binds 23S rRNA.

The chain is Large ribosomal subunit protein eL20 from Thermococcus kodakarensis (strain ATCC BAA-918 / JCM 12380 / KOD1) (Pyrococcus kodakaraensis (strain KOD1)).